The primary structure comprises 358 residues: 3-O-methylredipecamine 2-O-methyltransferase IpeOMT3 (358 aa).

Residues Gly-193, Asp-216, Asp-236, Met-237, and Lys-250 each contribute to the S-adenosyl-L-methionine site. The active-site Proton acceptor is His-254.

The protein belongs to the class I-like SAM-binding methyltransferase superfamily. Cation-independent O-methyltransferase family. Expressed in roots.

The protein localises to the cytoplasm. It is found in the cytosol. The enzyme catalyses (S)-reticuline + S-adenosyl-L-methionine = (S)-laudanine + S-adenosyl-L-homocysteine + H(+). It functions in the pathway alkaloid biosynthesis. Functionally, O-methyltransferase involved in the biosynthesis of ipecac and benzylisoquinoline monoterpenoid-isoquinoline alkaloids natural products, starting by the condensation of dopamine and secologanin, and including emetine and cephaeline, drugs used both as anti-protozoal (e.g. treatment of ameobiasis) and as emetic agents. Catalyzes 2-O-methylation of 3-O-methylredipecamine and, with less efficiency, the 7-O-methylation of (S)-coclaurine, (R,S)-N-methylcoclaurine, (R,S)-4'-O-methylcoclaurine, (R,S)-6-O-methyllaudanosoline, nororientaline, (S)-norreticuline and (S)-reticuline. This chain is 3-O-methylredipecamine 2-O-methyltransferase IpeOMT3, found in Carapichea ipecacuanha (Ipecac).